Here is a 191-residue protein sequence, read N- to C-terminus: Potassium-transporting ATPase KdpC subunit (191 aa).

Residues 6-26 (PALVLFILLTLLTGGVYPLLT) traverse the membrane as a helical segment.

Belongs to the KdpC family. The system is composed of three essential subunits: KdpA, KdpB and KdpC.

Its subcellular location is the cell inner membrane. Functionally, part of the high-affinity ATP-driven potassium transport (or Kdp) system, which catalyzes the hydrolysis of ATP coupled with the electrogenic transport of potassium into the cytoplasm. This subunit acts as a catalytic chaperone that increases the ATP-binding affinity of the ATP-hydrolyzing subunit KdpB by the formation of a transient KdpB/KdpC/ATP ternary complex. The protein is Potassium-transporting ATPase KdpC subunit of Klebsiella pneumoniae subsp. pneumoniae (strain ATCC 700721 / MGH 78578).